We begin with the raw amino-acid sequence, 93 residues long: PqqA binding protein (93 aa).

This sequence belongs to the PqqD family. As to quaternary structure, monomer. Interacts with PqqE.

Its pathway is cofactor biosynthesis; pyrroloquinoline quinone biosynthesis. In terms of biological role, functions as a PqqA binding protein and presents PqqA to PqqE, in the pyrroloquinoline quinone (PQQ) biosynthetic pathway. This chain is PqqA binding protein, found in Methylococcus capsulatus (strain ATCC 33009 / NCIMB 11132 / Bath).